Consider the following 208-residue polypeptide: Thymidylate kinase (208 aa).

Residue 10 to 17 (GLEGAGKS) coordinates ATP.

Belongs to the thymidylate kinase family.

The catalysed reaction is dTMP + ATP = dTDP + ADP. Its function is as follows. Phosphorylation of dTMP to form dTDP in both de novo and salvage pathways of dTTP synthesis. The chain is Thymidylate kinase from Pseudoalteromonas translucida (strain TAC 125).